The sequence spans 307 residues: Myeloid-associated differentiation marker-like protein 2 (307 aa).

2 MARVEL domains span residues 17 to 154 (AVTS…ARPG) and 159 to 303 (YMAT…RIRF). A run of 7 helical transmembrane segments spans residues 53-73 (FCMA…ACEF), 90-110 (AFAM…PLYF), 129-149 (LAAS…VALT), 163-183 (VSGL…GALV), 198-218 (VAVY…SVMG), 232-252 (VVYT…WPVF), and 278-298 (LVVA…LAYS).

The protein belongs to the MAL family.

The protein resides in the membrane. In Rattus norvegicus (Rat), this protein is Myeloid-associated differentiation marker-like protein 2 (Myadml2).